We begin with the raw amino-acid sequence, 441 residues long: ATP-dependent protease ATPase subunit HslU (441 aa).

Residues Ile18, 60-65 (GVGKTE), Asp254, Glu319, and Arg391 contribute to the ATP site.

The protein belongs to the ClpX chaperone family. HslU subfamily. As to quaternary structure, a double ring-shaped homohexamer of HslV is capped on each side by a ring-shaped HslU homohexamer. The assembly of the HslU/HslV complex is dependent on binding of ATP.

The protein localises to the cytoplasm. ATPase subunit of a proteasome-like degradation complex; this subunit has chaperone activity. The binding of ATP and its subsequent hydrolysis by HslU are essential for unfolding of protein substrates subsequently hydrolyzed by HslV. HslU recognizes the N-terminal part of its protein substrates and unfolds these before they are guided to HslV for hydrolysis. The chain is ATP-dependent protease ATPase subunit HslU from Shewanella pealeana (strain ATCC 700345 / ANG-SQ1).